Consider the following 506-residue polypeptide: Heat stress transcription factor A-1 (506 aa).

Residues 157–207 (MEEEIEMLKRDKNVLMQELVRLRQQQQTTDHQLQTLGKRLQGMEQRQQQMM) are a coiled coil. The hydrophobic repeat HR-A/B stretch occupies residues 164–214 (LKRDKNVLMQELVRLRQQQQTTDHQLQTLGKRLQGMEQRQQQMMSFLAKAM). A disordered region spans residues 231–254 (RRRIVASNKKRRLPKQDGSLDSES). A compositionally biased stretch (basic residues) spans 232–243 (RRIVASNKKRRL). The Nuclear localization signal signature appears at 239-242 (KKRR). The AHA motif lies at 449 to 456 (DSFWEQFL).

This sequence belongs to the HSF family. Class A subfamily. In terms of assembly, homotrimer. Exhibits temperature-dependent phosphorylation.

The protein resides in the nucleus. Transcriptional regulator that specifically binds DNA of heat shock promoter elements (HSE). This is Heat stress transcription factor A-1 (HSFA1) from Oryza sativa subsp. japonica (Rice).